The primary structure comprises 313 residues: Glycine--tRNA ligase alpha subunit (313 aa).

This sequence belongs to the class-II aminoacyl-tRNA synthetase family. In terms of assembly, tetramer of two alpha and two beta subunits.

It is found in the cytoplasm. It catalyses the reaction tRNA(Gly) + glycine + ATP = glycyl-tRNA(Gly) + AMP + diphosphate. This Leuconostoc mesenteroides subsp. mesenteroides (strain ATCC 8293 / DSM 20343 / BCRC 11652 / CCM 1803 / JCM 6124 / NCDO 523 / NBRC 100496 / NCIMB 8023 / NCTC 12954 / NRRL B-1118 / 37Y) protein is Glycine--tRNA ligase alpha subunit.